The primary structure comprises 178 residues: Transcription factor E (178 aa).

In terms of domain architecture, HTH TFE/IIEalpha-type spans 4–88; sequence AEDLFINLAK…YWKPNIDQIN (85 aa).

The protein belongs to the TFE family. In terms of assembly, monomer. Interaction with RNA polymerase subunits RpoF and RpoE is necessary for Tfe stimulatory transcription activity. Able to interact with Tbp and RNA polymerase in the absence of DNA promoter. Interacts both with the preinitiation and elongation complexes.

Its function is as follows. Transcription factor that plays a role in the activation of archaeal genes transcribed by RNA polymerase. Facilitates transcription initiation by enhancing TATA-box recognition by TATA-box-binding protein (Tbp), and transcription factor B (Tfb) and RNA polymerase recruitment. Not absolutely required for transcription in vitro, but particularly important in cases where Tbp or Tfb function is not optimal. It dynamically alters the nucleic acid-binding properties of RNA polymerases by stabilizing the initiation complex and destabilizing elongation complexes. Seems to translocate with the RNA polymerase following initiation and acts by binding to the non template strand of the transcription bubble in elongation complexes. The protein is Transcription factor E of Saccharolobus islandicus (strain L.S.2.15 / Lassen #1) (Sulfolobus islandicus).